A 63-amino-acid polypeptide reads, in one-letter code: Small ribosomal subunit protein bS21 (63 aa).

Belongs to the bacterial ribosomal protein bS21 family.

This is Small ribosomal subunit protein bS21 from Syntrophus aciditrophicus (strain SB).